The chain runs to 137 residues: uncharacterized protein (137 aa).

This is an uncharacterized protein from Saccharomyces cerevisiae (strain ATCC 204508 / S288c) (Baker's yeast).